Here is a 192-residue protein sequence, read N- to C-terminus: uncharacterized protein (192 aa).

Residues 29-160 form the Nudix hydrolase domain; that stretch reads QRQAAVLIPV…PLDVYRRGNS (132 aa). The Nudix box signature appears at 67 to 89; sequence GAVDSTDASLIAAALREAQEEVA. 2 residues coordinate Mg(2+): E83 and E87.

Belongs to the Nudix hydrolase family. PCD1 subfamily. Mn(2+) serves as cofactor. Requires Mg(2+) as cofactor.

Probably mediates the hydrolysis of some nucleoside diphosphate derivatives. This is an uncharacterized protein from Salmonella agona (strain SL483).